Reading from the N-terminus, the 464-residue chain is MDFCFMIFYNSLSGQKEQFKPIEANKIKMYACGVTVYDDCHIGHARTYIAFDVINRYFKYRGYDVTLVRNITDIDDKIIKRANENGESTTELVERNIKAMHDVFARLNILKPSKEPRATETIPEMVAMIETLIKKGYAYQGANGDVFYRVTKFADYGKLSKQNLEALQQGSRVDVVEEKENPMDFVLWKMAKEGEPAWDSPWGAGRPGWHIECSAMSKKLLGDTFDIHAGGSDLRFPHHENEIAQSEACNECTFANYWLHSGMVKVNAEKMSKSLNNFFTIVEVLEEYHPEVVRYFLASTVYRSEINYSKENLENAKASVERLFNALRDIEPIEVNLPDDASEYEEKFIKAMDNDFNTPEALAVLFSLAKEINTLKTTNKYKASGYAYLLRKLCDVLGILFTDIEEYFKQGDGADASEIEKLIAERTQAKKDKNYARADEIRNQLQQQGIILEDSATGTTWKKG.

C32 contacts Zn(2+). A 'HIGH' region motif is present at residues 34–44; it reads VTVYDDCHIGH. Positions 213, 238, and 242 each coordinate Zn(2+). The 'KMSKS' region motif lies at 270 to 274; the sequence is KMSKS. K273 is an ATP binding site.

This sequence belongs to the class-I aminoacyl-tRNA synthetase family. As to quaternary structure, monomer. Zn(2+) serves as cofactor.

Its subcellular location is the cytoplasm. It carries out the reaction tRNA(Cys) + L-cysteine + ATP = L-cysteinyl-tRNA(Cys) + AMP + diphosphate. This Francisella tularensis subsp. holarctica (strain LVS) protein is Cysteine--tRNA ligase.